Consider the following 488-residue polypeptide: Glutamyl-tRNA(Gln) amidotransferase subunit B, mitochondrial (488 aa).

This sequence belongs to the GatB/GatE family. GatB subfamily. As to quaternary structure, subunit of the heterotrimeric GatFAB amidotransferase (AdT) complex, composed of A, B and F subunits.

It is found in the mitochondrion. The enzyme catalyses L-glutamyl-tRNA(Gln) + L-glutamine + ATP + H2O = L-glutaminyl-tRNA(Gln) + L-glutamate + ADP + phosphate + H(+). Functionally, allows the formation of correctly charged Gln-tRNA(Gln) through the transamidation of misacylated Glu-tRNA(Gln) in the mitochondria. The reaction takes place in the presence of glutamine and ATP through an activated gamma-phospho-Glu-tRNA(Gln). This Candida albicans (strain WO-1) (Yeast) protein is Glutamyl-tRNA(Gln) amidotransferase subunit B, mitochondrial.